Reading from the N-terminus, the 35-residue chain is U2-agatoxin-Aop1a (35 aa).

Disulfide bonds link C3/C19, C10/C24, and C18/C34. L35 carries the leucine amide modification.

The protein belongs to the neurotoxin 01 (U2-agtx) family. Expressed by the venom gland.

The protein localises to the secreted. Insect-selective toxin causing rapid but reversible paralysis in crickets. Suppresses the excitatory postsynaptic potentials evoked in lobster neuromuscular synaptic preparations, possibly by blocking the presynaptic calcium channel (Cav). Induces instantaneous reversible paralysis when injected into crickets. The protein is U2-agatoxin-Aop1a of Allagelena opulenta (Funnel weaving spider).